The primary structure comprises 562 residues: Glycine betaine/proline/choline/ectoine transporter VP1456 (562 aa).

The next 12 helical transmembrane spans lie at 68 to 88 (PVFG…LLVE), 110 to 130 (FFMW…FSPL), 147 to 167 (VSWL…FWSV), 203 to 223 (WGVH…FFAF), 243 to 263 (AWGW…LFGL), 287 to 307 (GIGT…LSVV), 322 to 342 (MIVA…TAMG), 373 to 393 (WTVF…MFIA), 404 to 424 (FLFA…SVFG), 456 to 476 (VLPY…VFFI), 503 to 523 (IFWA…GGKE), and 531 to 551 (GVVA…VSLV).

It belongs to the BCCT transporter (TC 2.A.15) family.

Its subcellular location is the cell inner membrane. In terms of biological role, involved in the uptake of osmoprotectants. Can transport glycine betaine, proline, choline and ectoine. The protein is Glycine betaine/proline/choline/ectoine transporter VP1456 of Vibrio parahaemolyticus serotype O3:K6 (strain RIMD 2210633).